A 67-amino-acid chain; its full sequence is Protein AaeX (67 aa).

2 helical membrane passes run 9–29 and 47–67; these read IFGL…ALFF and PALF…CLFV.

It belongs to the AaeX family.

Its subcellular location is the cell membrane. The polypeptide is Protein AaeX (Serratia marcescens).